Here is a 312-residue protein sequence, read N- to C-terminus: Methionyl-tRNA formyltransferase (312 aa).

107-110 (SLLP) lines the (6S)-5,6,7,8-tetrahydrofolate pocket.

This sequence belongs to the Fmt family.

It catalyses the reaction L-methionyl-tRNA(fMet) + (6R)-10-formyltetrahydrofolate = N-formyl-L-methionyl-tRNA(fMet) + (6S)-5,6,7,8-tetrahydrofolate + H(+). Attaches a formyl group to the free amino group of methionyl-tRNA(fMet). The formyl group appears to play a dual role in the initiator identity of N-formylmethionyl-tRNA by promoting its recognition by IF2 and preventing the misappropriation of this tRNA by the elongation apparatus. This is Methionyl-tRNA formyltransferase from Borreliella burgdorferi (strain ZS7) (Borrelia burgdorferi).